The following is a 491-amino-acid chain: Katanin p60 ATPase-containing subunit A1 (491 aa).

The interaction with KATNB1 stretch occupies residues 1-29 (MSLLMISENVKLAREYALLGNYDSAMVYY). An interaction with dynein and NDEL1 region spans residues 1–75 (MSLLMISENV…VKDIMKTLES (75 aa)). Residues 1–185 (MSLLMISENV…EPETNKFDST (185 aa)) form an interaction with microtubules region. Phosphoserine; by DYRK2 is present on residues S42 and S109. A disordered region spans residues 87 to 185 (QHDLPASEGE…EPETNKFDST (99 aa)). Over residues 117–144 (SSQYSDPKSHGNRPSTTVRVHRSSAQNV) the composition is skewed to polar residues. A Phosphothreonine; by DYRK2 modification is found at T133. Basic and acidic residues predominate over residues 145–169 (HNDRGKAVRCREKKEQNKGREEKNK). S170 carries the phosphoserine modification. An ATP-binding site is contributed by 249–256 (GPPGTGKT).

This sequence belongs to the AAA ATPase family. Katanin p60 subunit A1 subfamily. As to quaternary structure, can homooligomerize into hexameric rings, which may be promoted by interaction with microtubules. Interacts with KATNB1, which may serve as a targeting subunit. Interacts with ASPM; the katanin complex formation KATNA1:KATNB1 is required for the association of ASPM. Interacts with dynein and NDEL1. Associates with the E3 ligase complex containing DYRK2, EDD/UBR5, DDB1 and DCAF1 proteins (EDVP complex). Interacts with KLHL42 (via the kelch domains). Interacts with CUL3; the interaction is enhanced by KLHL42. Interacts with KATNB1 and KATNBL1. Interacts with CAMSAP2 and CAMSAP3; leading to regulate the length of CAMSAP-decorated microtubule stretches. Phosphorylation by DYRK2 triggers ubiquitination and subsequent degradation. In terms of processing, ubiquitinated by the BCR(KLHL42) E3 ubiquitin ligase complex, leading to its proteasomal degradation. Ubiquitinated by the EDVP E3 ligase complex and subsequently targeted for proteasomal degradation.

The protein resides in the cytoplasm. The protein localises to the midbody. Its subcellular location is the cytoskeleton. It is found in the microtubule organizing center. It localises to the centrosome. The protein resides in the spindle pole. The protein localises to the spindle. The catalysed reaction is n ATP + n H2O + a microtubule = n ADP + n phosphate + (n+1) alpha/beta tubulin heterodimers.. With respect to regulation, ATPase activity is stimulated by microtubules, which promote homooligomerization. ATP-dependent microtubule severing is stimulated by interaction with KATNB1. Catalytic subunit of a complex which severs microtubules in an ATP-dependent manner. Microtubule severing may promote rapid reorganization of cellular microtubule arrays and the release of microtubules from the centrosome following nucleation. Microtubule release from the mitotic spindle poles may allow depolymerization of the microtubule end proximal to the spindle pole, leading to poleward microtubule flux and poleward motion of chromosome. Microtubule release within the cell body of neurons may be required for their transport into neuronal processes by microtubule-dependent motor proteins. This transport is required for axonal growth. This is Katanin p60 ATPase-containing subunit A1 from Homo sapiens (Human).